Consider the following 466-residue polypeptide: Asparagine--tRNA ligase (466 aa).

Belongs to the class-II aminoacyl-tRNA synthetase family. Homodimer.

It localises to the cytoplasm. It carries out the reaction tRNA(Asn) + L-asparagine + ATP = L-asparaginyl-tRNA(Asn) + AMP + diphosphate + H(+). The chain is Asparagine--tRNA ligase from Shewanella denitrificans (strain OS217 / ATCC BAA-1090 / DSM 15013).